A 119-amino-acid chain; its full sequence is Small ribosomal subunit protein uS13m (119 aa).

Belongs to the universal ribosomal protein uS13 family. Part of the small ribosomal subunit.

It is found in the mitochondrion. Its function is as follows. Located at the top of the head of the small subunit, it contacts several helices of the small subunit rRNA. The polypeptide is Small ribosomal subunit protein uS13m (RPS13) (Prototheca wickerhamii).